The primary structure comprises 743 residues: Dolichyl-phosphate-mannose--protein mannosyltransferase 5 (743 aa).

Residues 1–46 (MNKEHLLKVDPIPDVTIKRGPLRSFLITKPCDNLSSLRTVTSSKEK) are Lumenal-facing. An N-linked (GlcNAc...) asparagine glycan is attached at N33. A helical transmembrane segment spans residues 47-67 (LLVGCLLIFTAIVRLHNISLP). Over 68–129 (NSVVFGENEV…IGTEYTANVP (62 aa)) the chain is Cytoplasmic. A helical transmembrane segment spans residues 130–150 (YVAMRFFSATLGIVSVLVLYL). Residues 151–158 (TLRVSGVK) lie on the Lumenal side of the membrane. A helical membrane pass occupies residues 159–179 (IAVAAICAVCFAIENSFVTLS). Residue R180 is a topological domain, cytoplasmic. The chain crosses the membrane as a helical span at residues 181 to 201 (FTLIEGPFVFFMACAVYFFRR). At 202–231 (SELYLPNSCKANKSLLAASIALGFAVSSKW) the chain is on the lumenal side. N-linked (GlcNAc...) asparagine glycosylation is present at N213. Residues 232–252 (AGLFTIAWAGIIVLWRVWFMI) form a helical membrane-spanning segment. Residues 253 to 264 (GDLSRPIGSSIK) lie on the Cytoplasmic side of the membrane. The helical transmembrane segment at 265-285 (YMAFQFTCLLAIPAFIYFLIF) threads the bilayer. The Lumenal portion of the chain corresponds to 286 to 583 (SVHIKTLNVN…GREVYFLGNA (298 aa)). An MIR 1 domain is found at 320–374 (VAEVAVGSAVSLNHVGTAGGYLHSHLHNYPAGSMQQQVTLYPHIDQNNKWIIELA). Residues N380 and N386 are each glycosylated (N-linked (GlcNAc...) asparagine). MIR domains are found at residues 384–444 (FQNL…IEID) and 454–510 (QEHI…IEEN). The chain crosses the membrane as a helical span at residues 584-604 (VLWWSVTAFICTFIIGVAVEL). Residues 605–623 (LAWKLGVNILRDKHIINFH) are Cytoplasmic-facing. Residues 624 to 644 (YQVFQYLLGFAAHYFPYFFVG) form a helical membrane-spanning segment. At 645 to 646 (QK) the chain is on the lumenal side. The helical transmembrane segment at 647–667 (LFLYDYLPAYYFGILAFGHAL) threads the bilayer. Over 668–683 (DLISTYISNKRNNTGY) the chain is Cytoplasmic. The chain crosses the membrane as a helical span at residues 684–704 (IVVAIFMVVCFYFFSEHSPLI). The Lumenal portion of the chain corresponds to 705–743 (YATGWSSNLCKRSKWLGSWDFYCNSLLLSDSHYELNAES).

This sequence belongs to the glycosyltransferase 39 family. In terms of assembly, PMT3 and PMT5 form a functional heterodimer. Also forms a minor complex with PMT2.

The protein localises to the endoplasmic reticulum membrane. The catalysed reaction is a di-trans,poly-cis-dolichyl beta-D-mannosyl phosphate + L-seryl-[protein] = 3-O-(alpha-D-mannosyl)-L-seryl-[protein] + a di-trans,poly-cis-dolichyl phosphate + H(+). It catalyses the reaction a di-trans,poly-cis-dolichyl beta-D-mannosyl phosphate + L-threonyl-[protein] = 3-O-(alpha-D-mannosyl)-L-threonyl-[protein] + a di-trans,poly-cis-dolichyl phosphate + H(+). It functions in the pathway protein modification; protein glycosylation. Functionally, protein O-mannosyltransferase involved in O-glycosylation which is essential for cell wall rigidity. Forms a heterodimeric complex with PMT3 and more rarely with PMT2 to transfer mannose from Dol-P-mannose to Ser or Thr residues on proteins. The protein is Dolichyl-phosphate-mannose--protein mannosyltransferase 5 of Saccharomyces cerevisiae (strain ATCC 204508 / S288c) (Baker's yeast).